The following is a 127-amino-acid chain: Ribosome-binding factor A (127 aa).

This sequence belongs to the RbfA family. In terms of assembly, monomer. Binds 30S ribosomal subunits, but not 50S ribosomal subunits or 70S ribosomes.

Its subcellular location is the cytoplasm. One of several proteins that assist in the late maturation steps of the functional core of the 30S ribosomal subunit. Associates with free 30S ribosomal subunits (but not with 30S subunits that are part of 70S ribosomes or polysomes). Required for efficient processing of 16S rRNA. May interact with the 5'-terminal helix region of 16S rRNA. This is Ribosome-binding factor A from Nitrosococcus oceani (strain ATCC 19707 / BCRC 17464 / JCM 30415 / NCIMB 11848 / C-107).